Consider the following 1386-residue polypeptide: YLP motif-containing protein 1 (1386 aa).

2 disordered regions span residues 1–336 (MYPN…EDAR) and 517–1068 (TSIP…PPGR). A compositionally biased stretch (pro residues) spans 14–27 (YPPPPVPPPPPPVA). 2 stretches are compositionally biased toward low complexity: residues 31 to 50 (ASPG…SSSG) and 59 to 80 (LAQL…LQPH). 5 stretches are compositionally biased toward pro residues: residues 81-93 (HLPP…PPVM), 102-114 (QPPP…PPGP), 148-158 (PESPPVPPGSY), 166-176 (MPPPQPPPSYY), and 184-203 (YLPP…PPSI). The segment covering 237–259 (STMTPQEQQQYWYRQHLLSLQQR) has biased composition (polar residues). The span at 260 to 270 (TKVHLPGHKKG) shows a compositional bias: basic residues. Residues 276 to 285 (DVPEPIKEEA) show a composition bias toward basic and acidic residues. Pro residues predominate over residues 302 to 317 (PPLPPPNEEAPPPLSP). Acidic residues predominate over residues 320–333 (PQSEDSEDSEDSEE). 3 stretches are compositionally biased toward pro residues: residues 517-558 (TSIP…PPPA), 566-603 (PVLP…PQGM), and 641-650 (PPSPYHPPPQ). Over residues 651-667 (SEQVNSKPLNKVFSSEQ) the composition is skewed to polar residues. Lysine 683 bears the N6-methyllysine mark. Residues 706 to 722 (RGPREQKEQLQKLKDFG) are compositionally biased toward basic and acidic residues. The span at 746–761 (MYPPPGSYRPPPPMGK) shows a compositional bias: pro residues. The segment covering 762–779 (PPGSIVRPSAPPARSSIP) has biased composition (low complexity). Pro residues-rich tracts occupy residues 781–803 (TRPP…PPPV) and 848–878 (PVLP…PPPV). A Glycyl lysine isopeptide (Lys-Gly) (interchain with G-Cter in SUMO2) cross-link involves residue lysine 894. Basic and acidic residues-rich tracts occupy residues 904–938 (ITLR…EPYF), 945–1014 (TDHR…DRPP), 1023–1033 (GERRTYPEERM), and 1049–1068 (RVEK…PPGR). Lysine 951 participates in a covalent cross-link: Glycyl lysine isopeptide (Lys-Gly) (interchain with G-Cter in SUMO2). The segment at 1336–1343 (KKRVRWAD) is involved in interaction with PPP1CA.

As to quaternary structure, interacts with PPP1CA and NCOA5. Forms a complex with ILF2, ILF3, KHDRBS1, RBMX, NCOA5 and PPP1CA.

The protein localises to the nucleus. The protein resides in the nucleus speckle. Plays a role in the reduction of telomerase activity during differentiation of embryonic stem cells by binding to the core promoter of TERT and controlling its down-regulation. The chain is YLP motif-containing protein 1 (Ylpm1) from Mus musculus (Mouse).